The sequence spans 609 residues: MAPGGLLTLAGAAAASTAAAAYLDAKLHLTKDLNQLARAERGAQNFARAVEQRKASGFFLFEAAAARLGDAPCIWSRGHPEYSWTQTYQRACQYGHYFRDLGVVAGQHVGVYLYNSPELMFIWMGLLSIGAAPALINYNLGSDALVHCVRLSRSRFLIYDDASDCSSRIHEVGERLRDINVEAIMLSGSGTTGLPKAAPITVARNYPSASLLPKTFGQKPGPNGDRTYYCIPLYHGTGGIAAMNDLMSGISIALAPKFSLSRFWDDCIESGSTIFVYVGELIRYLLSAPASPKDRQHRVRLVWGNGLSPELWTKFQDRFGVSDIGEFYASTEGVLTLLKHYRGGGFGLGAVGHHGWLLRRKFHNDYVPVRIDPETGDIWRSPKTGFAERLPYERGGEILARLPSRSAWAGYWHAEEATQKKLVENVFEKGDLYFRTGDALRRDADGHWYFLDRLGDTYRWKGENVSTTEVGQVLGSHADIAEANVYGVQVPNHDGRAGCAAIALKNAATPDTLDWSRLTSLLRSELPSYAVPVFIRVRETVGGMSTDNHKHNKVPLRDEGVDPRSMGSKVPGSEKDRFFWLPAGASKYVPFTERDWDLLSGQSAARPRL.

An AMP-binding site is contributed by 185–196 (MLSGSGTTGLPK). A disordered region spans residues 545–570 (STDNHKHNKVPLRDEGVDPRSMGSKV).

The protein belongs to the ATP-dependent AMP-binding enzyme family.

The enzyme catalyses isopenicillin N = penicillin N. The protein operates within antibiotic biosynthesis; cephalosporin C biosynthesis. In terms of biological role, together with cefD2, catalyzes the reversible isomerization between isopenicillin N and penicillin N. This two-component IPN epimerase system may function by two sequential steps, an activation of isopenicillin N by the acyl-CoA synthase component cefD1, followed by epimerization by the acyl-CoA racemase component cefD2. This chain is Isopenicillin N epimerase component 1 (cefD1), found in Hapsidospora chrysogena (Acremonium chrysogenum).